Reading from the N-terminus, the 539-residue chain is 2-isopropylmalate synthase (539 aa).

One can recognise a Pyruvate carboxyltransferase domain in the interval 8-269 (VLIFDTTLRD…YFNPFFGRPP (262 aa)). The Mn(2+) site is built by Asp17, His208, His210, and Asn244. The regulatory domain stretch occupies residues 408–539 (QLKLVQVSCG…DLAKVEKKGI (132 aa)).

It belongs to the alpha-IPM synthase/homocitrate synthase family. LeuA type 1 subfamily. Homodimer. The cofactor is Mn(2+).

It localises to the cytoplasm. The enzyme catalyses 3-methyl-2-oxobutanoate + acetyl-CoA + H2O = (2S)-2-isopropylmalate + CoA + H(+). The protein operates within amino-acid biosynthesis; L-leucine biosynthesis; L-leucine from 3-methyl-2-oxobutanoate: step 1/4. Catalyzes the condensation of the acetyl group of acetyl-CoA with 3-methyl-2-oxobutanoate (2-ketoisovalerate) to form 3-carboxy-3-hydroxy-4-methylpentanoate (2-isopropylmalate). The polypeptide is 2-isopropylmalate synthase (Prochlorococcus marinus (strain NATL2A)).